Consider the following 200-residue polypeptide: Protein GrpE (200 aa).

Over residues 1-11 (MTDNDGQKDFS) the composition is skewed to basic and acidic residues. Residues 1 to 43 (MTDNDGQKDFSEAAAENAGSKPGEPRVSKPYIMPDDPEETPSE) are disordered.

The protein belongs to the GrpE family. In terms of assembly, homodimer.

It is found in the cytoplasm. Participates actively in the response to hyperosmotic and heat shock by preventing the aggregation of stress-denatured proteins, in association with DnaK and GrpE. It is the nucleotide exchange factor for DnaK and may function as a thermosensor. Unfolded proteins bind initially to DnaJ; upon interaction with the DnaJ-bound protein, DnaK hydrolyzes its bound ATP, resulting in the formation of a stable complex. GrpE releases ADP from DnaK; ATP binding to DnaK triggers the release of the substrate protein, thus completing the reaction cycle. Several rounds of ATP-dependent interactions between DnaJ, DnaK and GrpE are required for fully efficient folding. This Afipia carboxidovorans (strain ATCC 49405 / DSM 1227 / KCTC 32145 / OM5) (Oligotropha carboxidovorans) protein is Protein GrpE.